Here is a 370-residue protein sequence, read N- to C-terminus: Ubiquitin carboxyl-terminal hydrolase 12-B (370 aa).

Positions 39-369 (FGLVNFGNTC…SGYILFYQSR (331 aa)) constitute a USP domain. The active-site Nucleophile is cysteine 48. Residues 145-168 (KQEKQNGRIPNGNIDNENNNNTPD) are disordered. Positions 155 to 165 (NGNIDNENNNN) are enriched in low complexity. Residues cysteine 186, cysteine 189, cysteine 233, and cysteine 236 each contribute to the Zn(2+) site. Catalysis depends on histidine 317, which acts as the Proton acceptor.

This sequence belongs to the peptidase C19 family. USP12/USP46 subfamily. Interacts with WDR48.

The catalysed reaction is Thiol-dependent hydrolysis of ester, thioester, amide, peptide and isopeptide bonds formed by the C-terminal Gly of ubiquitin (a 76-residue protein attached to proteins as an intracellular targeting signal).. In terms of biological role, deubiquitinating enzyme. Has almost no deubiquitinating activity by itself and requires the interaction with wdr48 to have a high activity. This chain is Ubiquitin carboxyl-terminal hydrolase 12-B (usp12-b), found in Xenopus laevis (African clawed frog).